A 171-amino-acid polypeptide reads, in one-letter code: MNIKTGDTVVVIAGGDQFAVDKKGVKTRKTGRVLKIDRVKNTVIVEGVNIVKKHQRPTSANDKGGIVEIPAPIHASNVAILDPKTNTPTRIGHRIENGVKVRYAKKSGQTLDKAAKPAKTKAEKVEKAATSSTDKPAKVTKAAKEAKPVKAVKSQKVEKNTSVQKKGASGK.

Positions 1 to 124 (MNIKTGDTVV…AKPAKTKAEK (124 aa)) are large ribosomal subunit protein uL24. The tract at residues 108–171 (GQTLDKAAKP…SVQKKGASGK (64 aa)) is disordered. A unknown region spans residues 125 to 171 (VEKAATSSTDKPAKVTKAAKEAKPVKAVKSQKVEKNTSVQKKGASGK).

This sequence belongs to the universal ribosomal protein uL24 family. As to quaternary structure, part of the 50S ribosomal subunit.

In terms of biological role, one of two assembly initiator proteins, it binds directly to the 5'-end of the 23S rRNA, where it nucleates assembly of the 50S subunit. Functionally, one of the proteins that surrounds the polypeptide exit tunnel on the outside of the subunit. This Acholeplasma laidlawii (strain PG-8A) protein is Large ribosomal subunit protein uL24.